A 381-amino-acid polypeptide reads, in one-letter code: Ceropsin (381 aa).

Topologically, residues 1–62 (MSISMDAGPG…MNPLWHALLG (62 aa)) are extracellular. Asn28 is a glycosylation site (N-linked (GlcNAc...) asparagine). Residues 63–83 (FTIGVLGFISMMGNGMVIYIF) form a helical membrane-spanning segment. Residues 84–96 (MTTKNLKTPSNLL) are Cytoplasmic-facing. The helical transmembrane segment at 97–117 (VVNLAFSDFLMMCAMSPAMVI) threads the bilayer. The Extracellular segment spans residues 118-133 (NCYNETWVFGPFACEL). N-linked (GlcNAc...) asparagine glycosylation occurs at Asn121. A disulfide bridge links Cys131 with Cys208. The helical transmembrane segment at 134–154 (YGCAGSLFGCASIWTMTMIAF) threads the bilayer. Topologically, residues 155-173 (DRYNVIVKGIAAKPMTNNG) are cytoplasmic. The helical transmembrane segment at 174–194 (ALLRILGIWAFSLAWTVAPFF) threads the bilayer. Residues 195 to 221 (GWNRYVPEGNMTACGTDYLTKDWFSRS) lie on the Extracellular side of the membrane. Residue Asn204 is glycosylated (N-linked (GlcNAc...) asparagine). A helical transmembrane segment spans residues 222–242 (YIVVYSVFVYFAPLLLIVYSY). The Cytoplasmic segment spans residues 243–284 (YYIVQAVSAHEKAMREQAKKMNVASLRSSEAANTSTECKLAK). Residues 285–305 (VALMTISLWFMAWTPYLVINY) form a helical membrane-spanning segment. At 306 to 316 (TGILESAPISP) the chain is on the extracellular side. Residues 317-339 (LATIWGSLFAKANAVYNPIVYGI) form a helical membrane-spanning segment. Residues 340 to 381 (SHPKYQAALYKRFPVLQCHSTTTDEASSVASGTTVMEEKPTA) are Cytoplasmic-facing.

The protein belongs to the G-protein coupled receptor 1 family. Opsin subfamily. As to expression, expressed bilaterally in dorsal and ventral anterior protocerebral cells and bilaterally in the dorsal posterior protocerebral and lateral posterior tritocerebral cells (at protein level). Expressed in the larval brain but not in the subesophageal ganglion or thoracic ganglion.

The protein resides in the membrane. Its function is as follows. Visual pigments are the light-absorbing molecules that mediate vision. They consist of an apoprotein, opsin, covalently linked to cis-retinal. May play a role in photoperiodic photoreception. The polypeptide is Ceropsin (Bombyx mori (Silk moth)).